We begin with the raw amino-acid sequence, 147 residues long: Hemoglobin subunit gamma (147 aa).

Positions histidine 3–histidine 147 constitute a Globin domain. 2 residues coordinate heme b: histidine 64 and histidine 93.

It belongs to the globin family. As to quaternary structure, heterotetramer of two alpha chains and two gamma chains. In terms of tissue distribution, red blood cells.

This protein functions as an embryonic globin, but the gene structure and chromosomal location resemble more closely the human gamma chain gene, which codes for a fetal globin. The polypeptide is Hemoglobin subunit gamma (HBG) (Oryctolagus cuniculus (Rabbit)).